Consider the following 269-residue polypeptide: uncharacterized protein (269 aa).

Residues 1-12 (MSKRTNNKKRKH) show a composition bias toward basic residues. The segment at 1 to 82 (MSKRTNNKKR…KKKENGNENV (82 aa)) is disordered. Residues 21 to 33 (PENQDENQDEEFL) are compositionally biased toward acidic residues. Positions 34 to 63 (EDKNKDKNQNKNKDKNKNKDMNKNKNKDMN) are enriched in basic and acidic residues.

This is an uncharacterized protein from Dictyostelium discoideum (Social amoeba).